The chain runs to 76 residues: Exodeoxyribonuclease 7 small subunit (76 aa).

This sequence belongs to the XseB family. In terms of assembly, heterooligomer composed of large and small subunits.

It localises to the cytoplasm. The enzyme catalyses Exonucleolytic cleavage in either 5'- to 3'- or 3'- to 5'-direction to yield nucleoside 5'-phosphates.. Functionally, bidirectionally degrades single-stranded DNA into large acid-insoluble oligonucleotides, which are then degraded further into small acid-soluble oligonucleotides. In Staphylococcus aureus (strain Mu3 / ATCC 700698), this protein is Exodeoxyribonuclease 7 small subunit.